A 167-amino-acid chain; its full sequence is Ribosome maturation factor RimM (167 aa).

In terms of domain architecture, PRC barrel spans 94–165; the sequence is ENEFYYSDII…KIIITPMEGL (72 aa).

The protein belongs to the RimM family. Binds ribosomal protein uS19.

The protein resides in the cytoplasm. Functionally, an accessory protein needed during the final step in the assembly of 30S ribosomal subunit, possibly for assembly of the head region. Essential for efficient processing of 16S rRNA. May be needed both before and after RbfA during the maturation of 16S rRNA. It has affinity for free ribosomal 30S subunits but not for 70S ribosomes. In Staphylococcus aureus (strain MRSA252), this protein is Ribosome maturation factor RimM.